The primary structure comprises 106 residues: MKTLVSYDIVEDKVRRKVFEACKDYGLTNVQYSLFFGDMTHNRREELFQRLRRIIGRQEGKVLICPVCDKDLRLSKAIEVSAGMPEEAAEAAVSYPGRSRKKARAG.

A Mg(2+)-binding site is contributed by Asp-8. A disordered region spans residues 86 to 106 (EEAAEAAVSYPGRSRKKARAG).

It belongs to the CRISPR-associated endoribonuclease Cas2 protein family. Homodimer, forms a heterotetramer with a Cas1 homodimer. Requires Mg(2+) as cofactor.

Functionally, CRISPR (clustered regularly interspaced short palindromic repeat), is an adaptive immune system that provides protection against mobile genetic elements (viruses, transposable elements and conjugative plasmids). CRISPR clusters contain sequences complementary to antecedent mobile elements and target invading nucleic acids. CRISPR clusters are transcribed and processed into CRISPR RNA (crRNA). Functions as a ssRNA-specific endoribonuclease. Involved in the integration of spacer DNA into the CRISPR cassette. In Desulforudis audaxviator (strain MP104C), this protein is CRISPR-associated endoribonuclease Cas2.